Reading from the N-terminus, the 426-residue chain is C4-dicarboxylate transport protein (426 aa).

The next 8 helical transmembrane spans lie at 8–28 (VLYV…HFYP), 44–64 (LIKM…IAGM), 78–98 (LLYF…ATHV), 148–168 (GEIL…ATAG), 173–193 (VVTG…RIIT), 222–242 (LIGT…GIIA), 297–317 (GYSF…LFIA), and 355–375 (AATL…ILGI).

The protein belongs to the dicarboxylate/amino acid:cation symporter (DAACS) (TC 2.A.23) family.

The protein localises to the cell inner membrane. Its function is as follows. Responsible for the transport of dicarboxylates such as succinate, fumarate, and malate from the periplasm across the membrane. The protein is C4-dicarboxylate transport protein of Paraburkholderia xenovorans (strain LB400).